A 314-amino-acid chain; its full sequence is Olfactory receptor 1E1 (314 aa).

Residues 1–25 (MMGQNQTSISDFLLLGLPIQPEQQN) are Extracellular-facing. The N-linked (GlcNAc...) asparagine glycan is linked to asparagine 5. A helical transmembrane segment spans residues 26-49 (LCYALFLAMYLTTLLGNLLIIVLI). The Cytoplasmic portion of the chain corresponds to 50-57 (RLDSHLHT). A helical transmembrane segment spans residues 58 to 79 (PMYLFLSNLSFSDLCFSSVTIP). Over 80 to 100 (KLLQNMQNQDPSIPYADCLTQ) the chain is Extracellular. A helical transmembrane segment spans residues 101 to 120 (MYFFLLFGDLESFLLVAMAY). The Cytoplasmic segment spans residues 121–139 (DRYVAICFPLHYTAIMSPM). Residues 140–158 (LCLALVALSWVLTTFHAML) form a helical membrane-spanning segment. The Extracellular segment spans residues 159–195 (HTLLMARLCFCADNVIPHFFCDMSALLKLAFSDTRVN). Residues 196-219 (EWVIFIMGGLILVIPFLLILGSYA) form a helical membrane-spanning segment. The Cytoplasmic segment spans residues 220 to 236 (RIVSSILKVPSSKGICK). Residues 237 to 259 (AFSTCGSHLSVVSLFYGTVIGLY) form a helical membrane-spanning segment. The Extracellular segment spans residues 260 to 272 (LCSSANSSTLKDT). The helical transmembrane segment at 273–292 (VMAMMYTVVTPMLNPFIYSL) threads the bilayer. The Cytoplasmic portion of the chain corresponds to 293–314 (RNRDMKGALSRVIHQKKTFFSL).

Belongs to the G-protein coupled receptor 1 family.

The protein resides in the cell membrane. Functionally, odorant receptor. This Homo sapiens (Human) protein is Olfactory receptor 1E1 (OR1E1).